A 185-amino-acid polypeptide reads, in one-letter code: ATP synthase subunit delta, chloroplastic (185 aa).

This sequence belongs to the ATPase delta chain family. F-type ATPases have 2 components, F(1) - the catalytic core - and F(0) - the membrane proton channel. F(1) has five subunits: alpha(3), beta(3), gamma(1), delta(1), epsilon(1). CF(0) has four main subunits: a(1), b(1), b'(1) and c(10-14). The alpha and beta chains form an alternating ring which encloses part of the gamma chain. F(1) is attached to F(0) by a central stalk formed by the gamma and epsilon chains, while a peripheral stalk is formed by the delta, b and b' chains.

Its subcellular location is the plastid. It is found in the chloroplast thylakoid membrane. In terms of biological role, f(1)F(0) ATP synthase produces ATP from ADP in the presence of a proton or sodium gradient. F-type ATPases consist of two structural domains, F(1) containing the extramembraneous catalytic core and F(0) containing the membrane proton channel, linked together by a central stalk and a peripheral stalk. During catalysis, ATP synthesis in the catalytic domain of F(1) is coupled via a rotary mechanism of the central stalk subunits to proton translocation. This protein is part of the stalk that links CF(0) to CF(1). It either transmits conformational changes from CF(0) to CF(1) or is implicated in proton conduction. This chain is ATP synthase subunit delta, chloroplastic, found in Guillardia theta (Cryptophyte).